The following is a 452-amino-acid chain: Membrane-bound lytic murein transglycosylase D (452 aa).

An N-terminal signal peptide occupies residues 1–15 (MKAKAILLASVLLVG). Cys16 carries the N-palmitoyl cysteine lipid modification. Cys16 is lipidated: S-diacylglycerol cysteine. Positions 113–198 (NMPMELVLLP…LLTVAAYNSG (86 aa)) are slt-type domain. Residue Glu125 is part of the active site. LysM domains follow at residues 341–384 (RVYT…SLTI) and 400–448 (ITYR…KNNN).

The protein belongs to the transglycosylase Slt family.

The protein resides in the cell membrane. The catalysed reaction is Exolytic cleavage of the (1-&gt;4)-beta-glycosidic linkage between N-acetylmuramic acid (MurNAc) and N-acetylglucosamine (GlcNAc) residues in peptidoglycan, from either the reducing or the non-reducing ends of the peptidoglycan chains, with concomitant formation of a 1,6-anhydrobond in the MurNAc residue.. Functionally, murein-degrading enzyme. May play a role in recycling of muropeptides during cell elongation and/or cell division. The protein is Membrane-bound lytic murein transglycosylase D (mltD) of Escherichia coli O6:H1 (strain CFT073 / ATCC 700928 / UPEC).